Consider the following 606-residue polypeptide: NADH-ubiquinone oxidoreductase chain 5 (606 aa).

15 helical membrane-spanning segments follow: residues methionine 1–methionine 21, alanine 43–phenylalanine 63, methionine 87–tyrosine 107, phenylalanine 117–methionine 137, leucine 140–glycine 160, alanine 171–leucine 191, isoleucine 201–threonine 221, threonine 241–isoleucine 261, isoleucine 273–leucine 293, leucine 310–cysteine 330, valine 365–phenylalanine 385, leucine 409–phenylalanine 429, leucine 457–isoleucine 477, methionine 488–threonine 508, and glycine 582–leucine 602.

Belongs to the complex I subunit 5 family. Core subunit of respiratory chain NADH dehydrogenase (Complex I) which is composed of 45 different subunits.

The protein localises to the mitochondrion inner membrane. The catalysed reaction is a ubiquinone + NADH + 5 H(+)(in) = a ubiquinol + NAD(+) + 4 H(+)(out). Its function is as follows. Core subunit of the mitochondrial membrane respiratory chain NADH dehydrogenase (Complex I) which catalyzes electron transfer from NADH through the respiratory chain, using ubiquinone as an electron acceptor. Essential for the catalytic activity and assembly of complex I. This Canis lupus familiaris (Dog) protein is NADH-ubiquinone oxidoreductase chain 5 (MT-ND5).